Here is an 88-residue protein sequence, read N- to C-terminus: Cell division topological specificity factor (88 aa).

It belongs to the MinE family.

Prevents the cell division inhibition by proteins MinC and MinD at internal division sites while permitting inhibition at polar sites. This ensures cell division at the proper site by restricting the formation of a division septum at the midpoint of the long axis of the cell. This is Cell division topological specificity factor from Paracidovorax citrulli (strain AAC00-1) (Acidovorax citrulli).